Reading from the N-terminus, the 186-residue chain is Elongation factor P (186 aa).

Belongs to the elongation factor P family.

Its subcellular location is the cytoplasm. It functions in the pathway protein biosynthesis; polypeptide chain elongation. In terms of biological role, involved in peptide bond synthesis. Stimulates efficient translation and peptide-bond synthesis on native or reconstituted 70S ribosomes in vitro. Probably functions indirectly by altering the affinity of the ribosome for aminoacyl-tRNA, thus increasing their reactivity as acceptors for peptidyl transferase. The protein is Elongation factor P of Synechococcus sp. (strain RCC307).